The chain runs to 363 residues: Transcription factor PIF6 (363 aa).

Disordered regions lie at residues 154-204 (SEGS…RNDI) and 340-363 (IPNP…KTNR). Over residues 178–188 (RTRKALVKRKR) the composition is skewed to basic residues. The bHLH domain occupies 188–237 (RNAEAYNSPERNQRNDINKKMRTLQNLLPNSHKDDNESMLDEAINYMTNL). Residues 340-350 (IPNPNSLSNLD) are compositionally biased toward polar residues. Over residues 354–363 (LHKKSRKTNR) the composition is skewed to basic residues.

In terms of assembly, homodimer. Interacts with APRR1/TOC1. Binds to RGL2 and RGA. Associates to PTAC12/HMR/PAP5 which acts as a transcriptional coactivator. As to expression, mainly expressed in fruits and flowers and, to a lower extent, in leaves, stems, seedlings and roots.

It is found in the nucleus. Its function is as follows. Transcription factor. This is Transcription factor PIF6 from Arabidopsis thaliana (Mouse-ear cress).